We begin with the raw amino-acid sequence, 391 residues long: Heme A synthase (391 aa).

8 helical membrane-spanning segments follow: residues 37-57, 121-141, 152-172, 186-206, 229-249, 298-318, 332-352, and 354-374; these read IRLW…VGGL, RQLG…FLVA, LLAL…MVAS, LAVH…QALL, TTVL…VAGI, FLHR…WIFG, LLAL…LSAA, and WQVA…ILHA. Histidine 300 provides a ligand contact to heme. Histidine 360 lines the heme pocket.

This sequence belongs to the COX15/CtaA family. Type 2 subfamily. In terms of assembly, interacts with CtaB. The cofactor is heme b.

It localises to the cell membrane. The catalysed reaction is Fe(II)-heme o + 2 A + H2O = Fe(II)-heme a + 2 AH2. The protein operates within porphyrin-containing compound metabolism; heme A biosynthesis; heme A from heme O: step 1/1. Catalyzes the conversion of heme O to heme A by two successive hydroxylations of the methyl group at C8. The first hydroxylation forms heme I, the second hydroxylation results in an unstable dihydroxymethyl group, which spontaneously dehydrates, resulting in the formyl group of heme A. This Cereibacter sphaeroides (strain ATCC 17025 / ATH 2.4.3) (Rhodobacter sphaeroides) protein is Heme A synthase.